The chain runs to 393 residues: Messenger RNA-binding inhibitor of apoptosis 1 (393 aa).

The KH 1-like stretch occupies residues Glu12 to Lys76. Residues Val79–Phe157 are KH 2-like. The interval Glu259–Asn322 is KH 3-like. The tract at residues Met328 to Asp393 is disordered. The span at Ser345–Thr359 shows a compositional bias: low complexity.

As to quaternary structure, may interact with wago-4. Expressed throughout the germline and in oocytes (at protein level).

The protein localises to the cytoplasm. It localises to the perinuclear region. Its function is as follows. RNA-binding protein which binds to its own mRNA and target mRNAs to negatively regulate gene expression to modulate apoptosis and differentiation in the germline. Negatively regulates the expression of the argonaute protein wago-4, and may thus play a role in RNA-mediated gene silencing (RNAi) in the germline. The sequence is that of Messenger RNA-binding inhibitor of apoptosis 1 from Caenorhabditis elegans.